The following is a 357-amino-acid chain: Fulicin peptides (357 aa).

The signal sequence occupies residues methionine 1 to glutamine 17. The propeptide occupies valine 18–proline 119. Asparagine 123 bears the D-asparagine mark. Valine 126 carries the post-translational modification Valine amide. Residues asparagine 130 to serine 194 constitute a propeptide that is removed on maturation. A valine amide mark is found at valine 201 and valine 209. Leucine 217 and leucine 226 each carry leucine amide. Isoleucine amide is present on residues isoleucine 233 and isoleucine 242. Residues valine 250 and valine 259 each carry the valine amide modification. The propeptide occupies asparagine 263–asparagine 298. Position 305 is a leucine amide (leucine 305). Residues threonine 311–lysine 357 constitute a propeptide that is removed on maturation.

Found in central ganglia and the ventricles and atria of the heart.

Its function is as follows. Potentiates tetanic contraction of the penis retractor muscle at very low concentrations, and also shows modulatory actions on the activity of the buccal and ventricular muscles and the central ganglionic neurons. This chain is Fulicin peptides, found in Lissachatina fulica (Giant African land snail).